Reading from the N-terminus, the 622-residue chain is Phosphoribomutase (622 aa).

Substrate-binding positions include threonine 57, arginine 61, 158–159 (SH), and lysine 168. Residue serine 158 is the Phosphoserine intermediate of the active site. Serine 158 is a binding site for Mg(2+). At serine 158 the chain carries Phosphoserine. Mg(2+) is bound by residues aspartate 325, aspartate 327, and aspartate 329. Residues 329 to 330 (DR), threonine 404, 428 to 430 (EEA), and lysine 442 contribute to the substrate site.

It belongs to the phosphohexose mutase family. Requires Mg(2+) as cofactor.

The protein localises to the cytoplasm. The protein resides in the nucleus. It catalyses the reaction alpha-D-ribose 1-phosphate = D-ribose 5-phosphate. In terms of biological role, major phosphoribomutase that converts ribose 1-phosphate to ribose 5-phosphate. Involved in ribose salvage via the pentose phosphate pathway. In Saccharomyces cerevisiae (strain ATCC 204508 / S288c) (Baker's yeast), this protein is Phosphoribomutase.